Here is a 227-residue protein sequence, read N- to C-terminus: Holliday junction branch migration complex subunit RuvA (227 aa).

Positions 1-64 are domain I; the sequence is MFESISGILT…EDALRLFGFS (64 aa). A domain II region spans residues 65 to 143; that stretch reads NVQERTLFLS…LTDAASCAQS (79 aa). Residues 144 to 158 are flexible linker; it reads QTDDRAAHPSNLGCA. A domain III region spans residues 159–227; it reads PHAREIEDLV…HPHAVAPAAE (69 aa).

It belongs to the RuvA family. In terms of assembly, homotetramer. Forms an RuvA(8)-RuvB(12)-Holliday junction (HJ) complex. HJ DNA is sandwiched between 2 RuvA tetramers; dsDNA enters through RuvA and exits via RuvB. An RuvB hexamer assembles on each DNA strand where it exits the tetramer. Each RuvB hexamer is contacted by two RuvA subunits (via domain III) on 2 adjacent RuvB subunits; this complex drives branch migration. In the full resolvosome a probable DNA-RuvA(4)-RuvB(12)-RuvC(2) complex forms which resolves the HJ.

It localises to the cytoplasm. Functionally, the RuvA-RuvB-RuvC complex processes Holliday junction (HJ) DNA during genetic recombination and DNA repair, while the RuvA-RuvB complex plays an important role in the rescue of blocked DNA replication forks via replication fork reversal (RFR). RuvA specifically binds to HJ cruciform DNA, conferring on it an open structure. The RuvB hexamer acts as an ATP-dependent pump, pulling dsDNA into and through the RuvAB complex. HJ branch migration allows RuvC to scan DNA until it finds its consensus sequence, where it cleaves and resolves the cruciform DNA. This is Holliday junction branch migration complex subunit RuvA from Treponema pallidum (strain Nichols).